A 165-amino-acid polypeptide reads, in one-letter code: NADH-ubiquinone oxidoreductase chain 6 (165 aa).

The next 4 membrane-spanning stretches (helical) occupy residues 1–21, 47–67, 83–103, and 130–150; these read MVVYVTLIVMLFGSTLVFYSL, SFVPIVLFLVYIGGMLVVFPY, GEVVGLVFLFSSWVFMSFDNF, and GVLVILGVFVLLVALVGALII.

It belongs to the complex I subunit 6 family.

It is found in the mitochondrion membrane. It catalyses the reaction a ubiquinone + NADH + 5 H(+)(in) = a ubiquinol + NAD(+) + 4 H(+)(out). Core subunit of the mitochondrial membrane respiratory chain NADH dehydrogenase (Complex I) that is believed to belong to the minimal assembly required for catalysis. Complex I functions in the transfer of electrons from NADH to the respiratory chain. The immediate electron acceptor for the enzyme is believed to be ubiquinone. This is NADH-ubiquinone oxidoreductase chain 6 (ND6) from Strongylocentrotus purpuratus (Purple sea urchin).